A 457-amino-acid polypeptide reads, in one-letter code: Angiopoietin-related protein 6 (457 aa).

The N-terminal stretch at 1–24 is a signal peptide; sequence MGTARLRKLQLLLLLGAWRALGGA. Coiled coils occupy residues 51–77 and 126–164; these read DSEL…RAAE and LLAE…QHSS. Residues 201–235 are disordered; that stretch reads SNTSRRLDQTPEHQREQSLRQQGPPSSLLPTGHLA. N-linked (GlcNAc...) asparagine glycosylation occurs at Asn202. Basic and acidic residues predominate over residues 205 to 218; the sequence is RRLDQTPEHQREQS. Positions 219 to 229 are enriched in polar residues; that stretch reads LRQQGPPSSLL. The Fibrinogen C-terminal domain maps to 238–456; sequence TRPVGPWRDC…KAVMLTRLVR (219 aa). 2 cysteine pairs are disulfide-bonded: Cys247/Cys274 and Cys397/Cys410.

As to expression, highly expressed in the liver, specifically in hepatocytes, and weakly in the heart. Expressed in hematopoietic cells, platelets and mast cells, and detected at wounded skin.

The protein resides in the secreted. May play a role in the wound healing process. May promote epidermal proliferation, remodeling and regeneration. May promote the chemotactic activity of endothelial cells and induce neovascularization. May counteract high-fat diet-induced obesity and related insulin resistance through increased energy expenditure. The sequence is that of Angiopoietin-related protein 6 (Angptl6) from Mus musculus (Mouse).